The following is a 305-amino-acid chain: Putative lipid kinase USA300HOU_0749 (305 aa).

The DAGKc domain occupies 3-139; sequence NKYTHGVLFY…YDVIKINNQY (137 aa). ATP is bound by residues Ser44, 74 to 80, and Thr101; that span reads GDGTVNE. Residues Ser220, Asp223, and Glu225 each contribute to the Mg(2+) site. Residue Glu281 is the Proton acceptor of the active site.

This sequence belongs to the diacylglycerol/lipid kinase family. Mg(2+) serves as cofactor.

Its function is as follows. May catalyze the ATP-dependent phosphorylation of lipids other than diacylglycerol (DAG). This Staphylococcus aureus (strain USA300 / TCH1516) protein is Putative lipid kinase USA300HOU_0749.